We begin with the raw amino-acid sequence, 253 residues long: Phosphate import ATP-binding protein PstB (253 aa).

The region spanning isoleucine 7–isoleucine 248 is the ABC transporter domain. ATP is bound at residue glycine 39–serine 46.

The protein belongs to the ABC transporter superfamily. Phosphate importer (TC 3.A.1.7) family. In terms of assembly, the complex is composed of two ATP-binding proteins (PstB), two transmembrane proteins (PstC and PstA) and a solute-binding protein (PstS).

It is found in the cell inner membrane. The enzyme catalyses phosphate(out) + ATP + H2O = ADP + 2 phosphate(in) + H(+). Part of the ABC transporter complex PstSACB involved in phosphate import. Responsible for energy coupling to the transport system. This chain is Phosphate import ATP-binding protein PstB, found in Bacteroides fragilis (strain ATCC 25285 / DSM 2151 / CCUG 4856 / JCM 11019 / LMG 10263 / NCTC 9343 / Onslow / VPI 2553 / EN-2).